Here is a 129-residue protein sequence, read N- to C-terminus: Virion-associated protein (129 aa).

2 coiled-coil regions span residues 1-31 and 38-59; these read MANL…ILEL and IKES…LIND. A capsid binding region spans residues 122 to 129; that stretch reads PAGWPNQF.

It belongs to the caulimovirus ORF III family. Homotetramer, through coiled-coil domain. Homotrimer when bound on icosehadral capsid. Interacts with capsid protein, and with movement protein.

It localises to the virion. Its subcellular location is the host cell junction. The protein localises to the host plasmodesma. Functionally, plays a role in virus cell-to-cell and plant-to-plant transmission. Interacts with virion icosahedral capsid and movement protein, thereby facilitating virion cell-to-cell transmission through plasmodesmata opened by viral movement protein. Also interacts with aphid transmission factor, attaching the virion to aphid stylet when the animal feeds on an virus infected plant. Aphid saliva may later detach the virion, inducing release of infectious particles when the animal feeds on a new plant. The polypeptide is Virion-associated protein (Cauliflower mosaic virus (strain Strasbourg) (CaMV)).